Reading from the N-terminus, the 382-residue chain is Protein phosphatase 1A (382 aa).

Gly2 is lipidated: N-myristoyl glycine. The PPM-type phosphatase domain occupies 23 to 291; the sequence is RYGLSSMQGW…DNMSVILICF (269 aa). 4 residues coordinate Mn(2+): Asp60, Gly61, Asp239, and Asp282. 2 positions are modified to phosphoserine: Ser375 and Ser377.

This sequence belongs to the PP2C family. In terms of assembly, monomer. Interacts with SMAD2; the interaction dephosphorylates SMAD2 in its C-terminal SXS motif resulting in disruption of the SMAD2/SMAD4 complex, SMAD2 nuclear export and termination of the TGF-beta-mediated signaling. Interacts with SMAD2; the interaction dephosphorylates SMAD2 in its C-terminal SXS motif resulting in disruption of the SMAD2/SMAD4 complex, SMAD2 nuclear export and termination of the TGF-beta-mediated signaling. Interacts with the phosphorylated form of IKBKB/IKKB. Mg(2+) serves as cofactor. It depends on Mn(2+) as a cofactor. Post-translationally, N-myristoylation is essential for the recognition of its substrates for dephosphorylation.

Its subcellular location is the nucleus. It is found in the cytoplasm. It localises to the cytosol. The protein resides in the membrane. It carries out the reaction O-phospho-L-seryl-[protein] + H2O = L-seryl-[protein] + phosphate. The catalysed reaction is O-phospho-L-threonyl-[protein] + H2O = L-threonyl-[protein] + phosphate. Enzyme with a broad specificity. Negatively regulates TGF-beta signaling through dephosphorylating SMAD2 and SMAD3, resulting in their dissociation from SMAD4, nuclear export of the SMADs and termination of the TGF-beta-mediated signaling. Dephosphorylates PRKAA1 and PRKAA2. Plays an important role in the termination of TNF-alpha-mediated NF-kappa-B activation through dephosphorylating and inactivating IKBKB/IKKB. The sequence is that of Protein phosphatase 1A (Ppm1a) from Mus musculus (Mouse).